The chain runs to 279 residues: Pantothenate synthetase (279 aa).

26 to 33 contacts ATP; it reads MGNLHEGH. His-33 serves as the catalytic Proton donor. Gln-57 is a binding site for (R)-pantoate. Gln-57 contributes to the beta-alanine binding site. Residue 144–147 coordinates ATP; it reads GKKD. Gln-150 provides a ligand contact to (R)-pantoate. ATP is bound by residues Val-173 and 181-184; that span reads LSSR.

It belongs to the pantothenate synthetase family. Homodimer.

Its subcellular location is the cytoplasm. It catalyses the reaction (R)-pantoate + beta-alanine + ATP = (R)-pantothenate + AMP + diphosphate + H(+). The protein operates within cofactor biosynthesis; (R)-pantothenate biosynthesis; (R)-pantothenate from (R)-pantoate and beta-alanine: step 1/1. In terms of biological role, catalyzes the condensation of pantoate with beta-alanine in an ATP-dependent reaction via a pantoyl-adenylate intermediate. The protein is Pantothenate synthetase of Burkholderia ambifaria (strain MC40-6).